The chain runs to 617 residues: uncharacterized protein (617 aa).

The span at 387–396 (NGGMSATQLP) shows a compositional bias: polar residues. Disordered regions lie at residues 387–419 (NGGMSATQLPAPTRDSQRQAAANQFQQRTHAAP) and 443–599 (YDDF…NNEQ). A compositionally biased stretch (low complexity) spans 404-414 (RQAAANQFQQR). Residues 453 to 474 (QPLTQQQKDAARQRYQSASPEQ) are compositionally biased toward polar residues. Basic and acidic residues-rich tracts occupy residues 490–499 (QRREAARERI) and 522–531 (QRRDAARERI). Residues 549-570 (RPLNQQQRDNARQRVQSASPEQ) are compositionally biased toward polar residues. Residues 572-585 (QVFREKVQESRPQR) are compositionally biased toward basic and acidic residues. The segment covering 586-599 (LNDSNHTVRLNNEQ) has biased composition (polar residues).

This is an uncharacterized protein from Escherichia coli (strain K12).